Reading from the N-terminus, the 179-residue chain is Ribosome-recycling factor (179 aa).

It belongs to the RRF family.

It localises to the cytoplasm. Functionally, responsible for the release of ribosomes from messenger RNA at the termination of protein biosynthesis. May increase the efficiency of translation by recycling ribosomes from one round of translation to another. The protein is Ribosome-recycling factor of Chlamydia trachomatis serovar A (strain ATCC VR-571B / DSM 19440 / HAR-13).